The following is a 514-amino-acid chain: Peptide chain release factor 3 (514 aa).

One can recognise a tr-type G domain in the interval 8–268; that stretch reads KKRRTFAIIS…TFLEFAPEPH (261 aa). GTP contacts are provided by residues 17-24, 85-89, and 139-142; these read SHPDAGKT, DTPGH, and NKLD.

It belongs to the TRAFAC class translation factor GTPase superfamily. Classic translation factor GTPase family. PrfC subfamily.

Its subcellular location is the cytoplasm. Increases the formation of ribosomal termination complexes and stimulates activities of RF-1 and RF-2. It binds guanine nucleotides and has strong preference for UGA stop codons. It may interact directly with the ribosome. The stimulation of RF-1 and RF-2 is significantly reduced by GTP and GDP, but not by GMP. The sequence is that of Peptide chain release factor 3 from Streptococcus pyogenes serotype M18 (strain MGAS8232).